Reading from the N-terminus, the 430-residue chain is Glutamate-1-semialdehyde 2,1-aminomutase (430 aa).

N6-(pyridoxal phosphate)lysine is present on Lys265.

It belongs to the class-III pyridoxal-phosphate-dependent aminotransferase family. HemL subfamily. Pyridoxal 5'-phosphate is required as a cofactor.

The protein localises to the cytoplasm. It catalyses the reaction (S)-4-amino-5-oxopentanoate = 5-aminolevulinate. The protein operates within porphyrin-containing compound metabolism; protoporphyrin-IX biosynthesis; 5-aminolevulinate from L-glutamyl-tRNA(Glu): step 2/2. The sequence is that of Glutamate-1-semialdehyde 2,1-aminomutase from Caldivirga maquilingensis (strain ATCC 700844 / DSM 13496 / JCM 10307 / IC-167).